A 269-amino-acid chain; its full sequence is Formamidopyrimidine-DNA glycosylase (269 aa).

The active-site Schiff-base intermediate with DNA is the P2. E3 (proton donor) is an active-site residue. K57 functions as the Proton donor; for beta-elimination activity in the catalytic mechanism. The DNA site is built by H90, R109, and K150. An FPG-type zinc finger spans residues 235–269 (RVYGRNGEPCRTCGTPIETAKHGQRSTFFCRRCQK). R259 (proton donor; for delta-elimination activity) is an active-site residue.

The protein belongs to the FPG family. Monomer. Requires Zn(2+) as cofactor.

The enzyme catalyses Hydrolysis of DNA containing ring-opened 7-methylguanine residues, releasing 2,6-diamino-4-hydroxy-5-(N-methyl)formamidopyrimidine.. It catalyses the reaction 2'-deoxyribonucleotide-(2'-deoxyribose 5'-phosphate)-2'-deoxyribonucleotide-DNA = a 3'-end 2'-deoxyribonucleotide-(2,3-dehydro-2,3-deoxyribose 5'-phosphate)-DNA + a 5'-end 5'-phospho-2'-deoxyribonucleoside-DNA + H(+). Involved in base excision repair of DNA damaged by oxidation or by mutagenic agents. Acts as a DNA glycosylase that recognizes and removes damaged bases. Has a preference for oxidized purines, such as 7,8-dihydro-8-oxoguanine (8-oxoG). Has AP (apurinic/apyrimidinic) lyase activity and introduces nicks in the DNA strand. Cleaves the DNA backbone by beta-delta elimination to generate a single-strand break at the site of the removed base with both 3'- and 5'-phosphates. This is Formamidopyrimidine-DNA glycosylase from Pectobacterium carotovorum subsp. carotovorum (strain PC1).